The primary structure comprises 319 residues: MATTKPYRVLLYYMYTTIENPEEFAAEHLEFCNSLELKGRILVAKEGINGTCSGTVEQTEKYMEAMNNDPRFDGIVFKIDEEEGHAFKKMHVRPRPELVTLRLEDDINPHEITGKYLEPKDFYEAMKQEDTVIIDARNDYEFDLGHFKGAIKPDIESFRELPDWIRENKETLEGKKILTYCTGGIRCEKFSGWLVREGYEDVSQLHGGIVTYGKDPEVQGELWDGQCYVFDERIAVPVNQKEHVIVGKDHFTGEPCERYVNCSNPECNKKILCSEENEAKYLRACSHKCRVSPRNRYVIQHELTEEQVAAALEKIEAGK.

Residues 127–221 form the Rhodanese domain; that stretch reads KQEDTVIIDA…YGKDPEVQGE (95 aa). Residue Cys-181 is the Cysteine persulfide intermediate of the active site.

Belongs to the TrhO family.

The catalysed reaction is uridine(34) in tRNA + AH2 + O2 = 5-hydroxyuridine(34) in tRNA + A + H2O. Catalyzes oxygen-dependent 5-hydroxyuridine (ho5U) modification at position 34 in tRNAs. This is tRNA uridine(34) hydroxylase from Bacillus cereus (strain G9842).